The sequence spans 492 residues: MENLEQTCASLRAQIAATEAQLAGLKRDLEVAEQAAAEIKAQDVKSTGIREEGSEKKNPWPLLSEEYKRYGRQMIVPQLGLQGQLKLRSARVLIVGAGGLGCPAALYLAGAGVGTLGLVDGDTVEHSNLHRQVLHRSKNVGKFKVDSAIEYLRELNPHPTYVPYRAHLTPQEAPEIFKDYDIVLDCTDNPATRYLISDTAVLLGKPLVSASALRTEGQLIVLNNPPRPVGDKSGGPCYRCVFPKPPPATSVVSCADGGIIGPVVGTMGVLQAIEAIKVITSSPADETSASPPSLLIFSAYSTPPFRSIKIRSRRANCAVCSAEASVTVETLKTGSTDYVFFCGVAGPETLLRPEERITPLEFKKKHPGQVSHEQELGGSKEPTIIDVREQVQFDICSLDNSINIPISTILSSAASPTTSTPESLPSWLPHDIVSSSSTDPIYVVCRLGNDSQIAVRKMKELGLDQGGKRFICDIQGGLRAWREQIDPDWPEY.

ATP-binding positions include G99, D120, S127–R131, K144, and D188–N189. The Zn(2+) site is built by C237 and C240. C254 serves as the catalytic Glycyl thioester intermediate; for adenylyltransferase activity. Positions 317 and 320 each coordinate Zn(2+). Positions G378–P490 constitute a Rhodanese domain. The Cysteine persulfide intermediate; for sulfurtransferase activity role is filled by C445.

It in the N-terminal section; belongs to the HesA/MoeB/ThiF family. UBA4 subfamily. The cofactor is Zn(2+).

The protein resides in the cytoplasm. It localises to the cytosol. The catalysed reaction is [molybdopterin-synthase sulfur-carrier protein]-C-terminal Gly-Gly + ATP + H(+) = [molybdopterin-synthase sulfur-carrier protein]-C-terminal Gly-Gly-AMP + diphosphate. The enzyme catalyses [molybdopterin-synthase sulfur-carrier protein]-C-terminal Gly-Gly-AMP + S-sulfanyl-L-cysteinyl-[cysteine desulfurase] + AH2 = [molybdopterin-synthase sulfur-carrier protein]-C-terminal-Gly-aminoethanethioate + L-cysteinyl-[cysteine desulfurase] + A + AMP + 2 H(+). The protein operates within tRNA modification; 5-methoxycarbonylmethyl-2-thiouridine-tRNA biosynthesis. Its pathway is cofactor biosynthesis; molybdopterin biosynthesis. Functionally, plays a central role in 2-thiolation of mcm(5)S(2)U at tRNA wobble positions of cytosolic tRNA(Lys), tRNA(Glu) and tRNA(Gln). Also essential during biosynthesis of the molybdenum cofactor. Acts by mediating the C-terminal thiocarboxylation of sulfur carriers urm1 and mocs2a. Its N-terminus first activates urm1 and mocs2a as acyl-adenylates (-COAMP), then the persulfide sulfur on the catalytic cysteine is transferred to urm1 and mocs2a to form thiocarboxylation (-COSH) of their C-terminus. The reaction probably involves hydrogen sulfide that is generated from the persulfide intermediate and that acts as a nucleophile towards urm1 and mocs2a. Subsequently, a transient disulfide bond is formed. Does not use thiosulfate as sulfur donor; nfs1 probably acting as a sulfur donor for thiocarboxylation reactions. In Aspergillus clavatus (strain ATCC 1007 / CBS 513.65 / DSM 816 / NCTC 3887 / NRRL 1 / QM 1276 / 107), this protein is Adenylyltransferase and sulfurtransferase uba4.